Here is a 563-residue protein sequence, read N- to C-terminus: Grainyhead-like protein 1 homolog (563 aa).

The Grh/CP2 DB domain occupies N194–I428. Interaction with DNA stretches follow at residues T326 to K335 and R372 to R375. Positions E377–Y405 are disordered.

The protein belongs to the grh/CP2 family. Grainyhead subfamily.

The protein resides in the nucleus. Functionally, probable transcription factor. Binds a motif with the core sequence 5'-C[ACT][TG]G-3' in regulatory elements of target genes. Many putative target genes show oscillating expression levels, perhaps as a result of rhythmic variation in accumulation of grh-1. Plays a role in proper cuticle formation and/or barrier function and is required repetitively during development, for successful completion of each molt. Involved in modulating lifespan. Plays a role in defense response to bacteria. May act upstream of the p38 MAP kinase / pmk-1 pathway. May act downstream of the insulin/IGF-1 receptor signaling (IIS) pathway. The polypeptide is Grainyhead-like protein 1 homolog (Caenorhabditis elegans).